The primary structure comprises 509 residues: tRNA-2-methylthio-N(6)-dimethylallyladenosine synthase (509 aa).

Polar residues predominate over residues 1–13 (MNEQQRLASQQAN). A disordered region spans residues 1-26 (MNEQQRLASQQANSSKKKEEKDYSKY). A compositionally biased stretch (basic and acidic residues) spans 16 to 25 (KKKEEKDYSK). The region spanning 66-184 (RKFYIRTYGC…LPYILKDAMF (119 aa)) is the MTTase N-terminal domain. Residues cysteine 75, cysteine 111, cysteine 145, cysteine 221, cysteine 225, and cysteine 228 each coordinate [4Fe-4S] cluster. A Radical SAM core domain is found at 207-437 (RRGDIKAWVN…NALVNKLAIE (231 aa)). Positions 440–503 (NRYKGQIVEV…TWSLNGELVE (64 aa)) constitute a TRAM domain.

This sequence belongs to the methylthiotransferase family. MiaB subfamily. As to quaternary structure, monomer. [4Fe-4S] cluster is required as a cofactor.

Its subcellular location is the cytoplasm. The enzyme catalyses N(6)-dimethylallyladenosine(37) in tRNA + (sulfur carrier)-SH + AH2 + 2 S-adenosyl-L-methionine = 2-methylsulfanyl-N(6)-dimethylallyladenosine(37) in tRNA + (sulfur carrier)-H + 5'-deoxyadenosine + L-methionine + A + S-adenosyl-L-homocysteine + 2 H(+). Its function is as follows. Catalyzes the methylthiolation of N6-(dimethylallyl)adenosine (i(6)A), leading to the formation of 2-methylthio-N6-(dimethylallyl)adenosine (ms(2)i(6)A) at position 37 in tRNAs that read codons beginning with uridine. This chain is tRNA-2-methylthio-N(6)-dimethylallyladenosine synthase, found in Bacillus cereus (strain ATCC 10987 / NRS 248).